Consider the following 62-residue polypeptide: Large ribosomal subunit protein bL28 (62 aa).

It belongs to the bacterial ribosomal protein bL28 family.

The protein is Large ribosomal subunit protein bL28 of Streptococcus mutans serotype c (strain ATCC 700610 / UA159).